The chain runs to 1103 residues: Isoleucine--tRNA ligase (1103 aa).

Positions 53–63 (PFANGLPHYGH) match the 'HIGH' region motif. Positions 628-632 (KLSKR) match the 'KMSKS' region motif. An ATP-binding site is contributed by Lys-631.

This sequence belongs to the class-I aminoacyl-tRNA synthetase family. IleS type 2 subfamily. Monomer. It depends on Zn(2+) as a cofactor.

It localises to the cytoplasm. The catalysed reaction is tRNA(Ile) + L-isoleucine + ATP = L-isoleucyl-tRNA(Ile) + AMP + diphosphate. Its function is as follows. Catalyzes the attachment of isoleucine to tRNA(Ile). As IleRS can inadvertently accommodate and process structurally similar amino acids such as valine, to avoid such errors it has two additional distinct tRNA(Ile)-dependent editing activities. One activity is designated as 'pretransfer' editing and involves the hydrolysis of activated Val-AMP. The other activity is designated 'posttransfer' editing and involves deacylation of mischarged Val-tRNA(Ile). The chain is Isoleucine--tRNA ligase from Rickettsia akari (strain Hartford).